A 431-amino-acid chain; its full sequence is Glutamate-1-semialdehyde 2,1-aminomutase (431 aa).

An N6-(pyridoxal phosphate)lysine modification is found at K269.

It belongs to the class-III pyridoxal-phosphate-dependent aminotransferase family. HemL subfamily. Homodimer. Pyridoxal 5'-phosphate serves as cofactor.

It is found in the cytoplasm. The catalysed reaction is (S)-4-amino-5-oxopentanoate = 5-aminolevulinate. The protein operates within porphyrin-containing compound metabolism; protoporphyrin-IX biosynthesis; 5-aminolevulinate from L-glutamyl-tRNA(Glu): step 2/2. It participates in porphyrin-containing compound metabolism; chlorophyll biosynthesis. This is Glutamate-1-semialdehyde 2,1-aminomutase from Pelodictyon phaeoclathratiforme (strain DSM 5477 / BU-1).